The following is a 1487-amino-acid chain: Major viral transcription factor (1487 aa).

3 disordered regions span residues 41–295 (AAPD…LPPG), 310–370 (LAKT…AEEA), and 803–1007 (PPTR…HTPR). The span at 66–75 (VIPPPSPTPE) shows a compositional bias: pro residues. 2 stretches are compositionally biased toward low complexity: residues 165-193 (PSSASPGGGSPAPRVRSISISSSSSSSSS) and 201-213 (DGAGASSSSSSSS). Acidic residues predominate over residues 214 to 224 (DDSDSDEGGEE). Over residues 235–272 (AAKTPSAAGSPGPSSGGDRPAAGAATPKSCRSGAASPG) the composition is skewed to low complexity. Over residues 273-285 (APAPAPASAPAPS) the composition is skewed to pro residues. 3 stretches are compositionally biased toward low complexity: residues 807–829 (SQQPSSSSPGGEPFSGSAAAEGS), 849–860 (PSSHSQSPQHSQ), and 867–877 (ATTATCCRATQ). Positions 878 to 893 (TNARSRGQQHQPQKAR) are enriched in polar residues. Residues 920 to 929 (HGRPRGKSGK) are compositionally biased toward basic residues. The segment covering 938–951 (AAQAGASASFSSSA) has biased composition (low complexity). A compositionally biased stretch (basic and acidic residues) spans 988–1007 (GPDRRGGFRRVPRGDCHTPR).

It belongs to the herpesviridae ICP4 family. A long stretch of serine residues may be a major site of phosphorylation.

It localises to the host nucleus. Its function is as follows. This IE protein is a multifunctional protein capable of migrating to the nucleus, binding to DNA, trans-activating other viral genes, and autoregulating its own synthesis. In Equine herpesvirus 1 (strain Ab4p) (EHV-1), this protein is Major viral transcription factor (IE).